The primary structure comprises 239 residues: Aspartate/glutamate leucyltransferase (239 aa).

It belongs to the R-transferase family. Bpt subfamily.

Its subcellular location is the cytoplasm. It catalyses the reaction N-terminal L-glutamyl-[protein] + L-leucyl-tRNA(Leu) = N-terminal L-leucyl-L-glutamyl-[protein] + tRNA(Leu) + H(+). It carries out the reaction N-terminal L-aspartyl-[protein] + L-leucyl-tRNA(Leu) = N-terminal L-leucyl-L-aspartyl-[protein] + tRNA(Leu) + H(+). Functionally, functions in the N-end rule pathway of protein degradation where it conjugates Leu from its aminoacyl-tRNA to the N-termini of proteins containing an N-terminal aspartate or glutamate. This chain is Aspartate/glutamate leucyltransferase, found in Alkalilimnicola ehrlichii (strain ATCC BAA-1101 / DSM 17681 / MLHE-1).